The following is a 95-amino-acid chain: Glutaredoxin 1 (95 aa).

The 95-residue stretch at 1–95 (MNKSILHTII…DKLLEHQPKN (95 aa)) folds into the Glutaredoxin domain. A disulfide bridge connects residues C17 and C20.

This sequence belongs to the glutaredoxin family. As to quaternary structure, monomer.

It is found in the cytoplasm. Has a glutathione-disulfide oxidoreductase activity in the presence of NADPH and glutathione reductase. Reduces low molecular weight disulfides and proteins. This Rickettsia prowazekii (strain Madrid E) protein is Glutaredoxin 1 (grxC1).